Reading from the N-terminus, the 479-residue chain is mRNA export factor ICP27 homolog (479 aa).

Residues 1-15 (MVPSQRLSRTSSISS) show a composition bias toward low complexity. Disordered regions lie at residues 1-77 (MVPS…PSSV) and 91-210 (KKWD…NKPW). The segment covering 35 to 44 (TDCDMDPMEG) has biased composition (acidic residues). Residues 132–142 (EVHGCTDESYG) show a composition bias toward basic and acidic residues. The Zn(2+) site is built by cysteine 354, histidine 445, cysteine 449, and cysteine 454. The CHC2-type zinc finger occupies 354–454 (CFLPNTRDYN…HTRDCRSASC (101 aa)).

This sequence belongs to the HHV-1 ICP27 protein family. In terms of assembly, interacts with host XPO1 and with the XPO1 export pathway components small GTPase RAN and nucleoporin NUP214. Interacts with host SPEN, OTT1 and OTT3. Interacts with host SRSF1, SRSF3, SRSF7 and SRPK1. Interacts with host DHX9; this interaction may have an inhibitory effect on virion production. Interacts (via N-terminus) with host NXF1; this interaction plays a role in mRNA export. Post-translationally, phosphorylated by cellular protein kinase CK2.

The protein localises to the host nucleus. The protein resides in the host cytoplasm. In terms of biological role, promotes the nuclear export of a subset of early and late viral mRNAs by interacting with mRNAs and cellular export proteins. Additionally may prevent the establishment of cellular antiviral state, by acting as an alternative splicing factor for cellular RNAs such as STAT1, resulting in a STAT1 mRNA incapable of producing the STAT1alpha isoform. The chain is mRNA export factor ICP27 homolog from Homo sapiens (Human).